Consider the following 364-residue polypeptide: Aspartate aminotransferase (364 aa).

Residues Gly23, Trp99, and Asn143 each contribute to the L-aspartate site. N6-(pyridoxal phosphate)lysine is present on Lys200. Arg320 contacts L-aspartate.

The protein belongs to the class-I pyridoxal-phosphate-dependent aminotransferase family. Homodimer. The cofactor is pyridoxal 5'-phosphate.

It is found in the cytoplasm. The catalysed reaction is L-aspartate + 2-oxoglutarate = oxaloacetate + L-glutamate. The chain is Aspartate aminotransferase (aspC) from Thermococcus kodakarensis (strain ATCC BAA-918 / JCM 12380 / KOD1) (Pyrococcus kodakaraensis (strain KOD1)).